A 474-amino-acid chain; its full sequence is 3-isopropylmalate dehydratase large subunit (474 aa).

Residues cysteine 350, cysteine 415, and cysteine 418 each coordinate [4Fe-4S] cluster.

Belongs to the aconitase/IPM isomerase family. LeuC type 1 subfamily. In terms of assembly, heterodimer of LeuC and LeuD. The cofactor is [4Fe-4S] cluster.

The catalysed reaction is (2R,3S)-3-isopropylmalate = (2S)-2-isopropylmalate. The protein operates within amino-acid biosynthesis; L-leucine biosynthesis; L-leucine from 3-methyl-2-oxobutanoate: step 2/4. In terms of biological role, catalyzes the isomerization between 2-isopropylmalate and 3-isopropylmalate, via the formation of 2-isopropylmaleate. This Phenylobacterium zucineum (strain HLK1) protein is 3-isopropylmalate dehydratase large subunit.